Here is a 552-residue protein sequence, read N- to C-terminus: Harmonin (552 aa).

The tract at residues 1–86 is N-terminal domain; the sequence is MDRKVAREFR…LTPRRSRKLK (86 aa). 2 consecutive PDZ domains span residues 87-169 and 211-293; these read EVRL…HIGL and KVFI…AAAG. Residues 194 to 552 form a mediates interaction with MYO7B region; sequence GVRGSLGSPG…KEYDDELTFF (359 aa). Ser219 carries the post-translational modification Phosphoserine. A coiled-coil region spans residues 310–377; it reads RELQRQELLM…EKFKKQWEED (68 aa). Residues 401–427 are disordered; sequence KPKYDQGVEPELEPADDLDGGTEEQGE. Residues 408 to 427 are compositionally biased toward acidic residues; sequence VEPELEPADDLDGGTEEQGE. Positions 452-537 constitute a PDZ 3 domain; sequence DVRLLRIKKE…QGGDWIDLVV (86 aa).

Part of the IMAC/intermicrovillar adhesion complex/intermicrovillar tip-link complex composed of ANKS4B, MYO7B, USH1C, CDHR2 and CDHR5. Part of a complex composed of USH1C, USH1G and MYO7A. Interacts with F-actin. Interacts with USH2A. Interacts with SLC4A7. Interacts (via PDZ1 domain) with the C-terminus of USHBP1. Interacts (via N-terminus and PDZ 2 domain) with CDH23. Interacts with USH1G. Interacts with MYO7B. Interacts with CDHR2 and CDHR5; may mediate their interaction with MYO7B at the microvilli tip. Interacts (via PDZ 1 domain) with ANKS4B. Interacts (via PDZ 1 domain) with DOCK4. In terms of tissue distribution, expressed in small intestine, colon, kidney, eye and weakly in pancreas. Expressed also in vestibule of the inner ear.

It is found in the cytoplasm. The protein localises to the cytosol. Its subcellular location is the cytoskeleton. The protein resides in the cell projection. It localises to the microvillus. In terms of biological role, anchoring/scaffolding protein that is a part of the functional network formed by USH1C, USH1G, CDH23 and MYO7A that mediates mechanotransduction in cochlear hair cells. Required for normal development and maintenance of cochlear hair cell bundles. As part of the intermicrovillar adhesion complex/IMAC plays a role in brush border differentiation, controlling microvilli organization and length. Probably plays a central regulatory role in the assembly of the complex, recruiting CDHR2, CDHR5 and MYO7B to the microvilli tips. The protein is Harmonin (USH1C) of Homo sapiens (Human).